The sequence spans 516 residues: Anaerobic nitric oxide reductase transcription regulator NorR (516 aa).

The residue at position 57 (Asp-57) is a 4-aspartylphosphate. Residues 187-416 form the Sigma-54 factor interaction domain; sequence IIGLSAPMLQ…LEHAIHRAVV (230 aa). ATP is bound by residues 215–222 and 278–287; these read GETGTGKE and ADNGTLFLDE. The H-T-H motif DNA-binding region spans 482–501; it reads WAATARALELDVANLHRLAK.

Its pathway is nitrogen metabolism; nitric oxide reduction. Functionally, required for the expression of anaerobic nitric oxide (NO) reductase, acts as a transcriptional activator for at least the norVW operon. Activation also requires sigma-54. This Klebsiella pneumoniae (strain 342) protein is Anaerobic nitric oxide reductase transcription regulator NorR.